The chain runs to 481 residues: MQEIYRFIDDAIEADRQRYTDIADQIWDHPETRFEEFWSAEHLASALESAGFTVTRNVGNIPNAFIASFGQGKPVIALLGEYDALAGLSQQAGCAQPTSVTPGENGHGCGHNLLGTAAFAAAIAVKKWLEQYGQGGTVRFYGCPGEEGGSGKTFMVREGVFDDVDAALTWHPEAFAGMFNTRTLANIQASWRFKGIAAHAANSPHLGRSALDAVTLMTTGTNFLNEHIIEKARVHYAITNSGGISPNVVQAQAEVLYLIRAPEMTDVQHIYDRVAKIAEGAALMTETTVECRFDKACSSYLPNRTLENAMYQALSHFGTPEWNSEELAFAKQIQATLTSNDRQNSLNNIAATGGENGKVFALRHRETVLANEVAPYAATDNVLAASTDVGDVSWKLPVAQCFSPCFAVGTPLHTWQLVSQGRTSIAHKGMLLAAKTMAATTVNLFLDSGLLQECQQEHQQVTDTQPYHCPIPKNVTPSPLK.

Forms a heterodimer with AbgA. The cofactor is Mn(2+).

Its function is as follows. Component of the p-aminobenzoyl-glutamate hydrolase multicomponent enzyme system which catalyzes the cleavage of p-aminobenzoyl-glutamate (PABA-GLU) to form p-aminobenzoate (PABA) and glutamate. AbgAB does not degrade dipeptides and the physiological role of abgABT should be clarified. The sequence is that of p-aminobenzoyl-glutamate hydrolase subunit B (abgB) from Escherichia coli (strain K12).